A 391-amino-acid polypeptide reads, in one-letter code: Extracellular metalloproteinase 3 (391 aa).

A propeptide spanning residues 1–9 (HNVVDYVAS) is cleaved from the precursor. N173 carries an N-linked (GlcNAc...) asparagine glycan. Zn(2+) is bound at residue H192. The active site involves E193. H196 is a Zn(2+) binding site. N-linked (GlcNAc...) asparagine glycans are attached at residues N243 and N385.

The protein belongs to the peptidase M36 family. The cofactor is Zn(2+).

The protein resides in the secreted. Functionally, secreted metalloproteinase probably acting as a virulence factor. This is Extracellular metalloproteinase 3 (MEP3) from Trichophyton soudanense.